A 123-amino-acid polypeptide reads, in one-letter code: DNA-directed RNA polymerase subunit omega (123 aa).

The interval 67–123 is disordered; it reads EESAADSLSLGGFSTADVEAEVGGGPVQPDPGASQERAFDEAADGTAQGSGDPDPTT.

The protein belongs to the RNA polymerase subunit omega family. As to quaternary structure, the RNAP catalytic core consists of 2 alpha, 1 beta, 1 beta' and 1 omega subunit. When a sigma factor is associated with the core the holoenzyme is formed, which can initiate transcription.

It catalyses the reaction RNA(n) + a ribonucleoside 5'-triphosphate = RNA(n+1) + diphosphate. Promotes RNA polymerase assembly. Latches the N- and C-terminal regions of the beta' subunit thereby facilitating its interaction with the beta and alpha subunits. The chain is DNA-directed RNA polymerase subunit omega from Halorhodospira halophila (strain DSM 244 / SL1) (Ectothiorhodospira halophila (strain DSM 244 / SL1)).